The chain runs to 212 residues: Ribosomal RNA large subunit methyltransferase E (212 aa).

The S-adenosyl-L-methionine site is built by Gly-57, Trp-59, Asp-77, Asp-93, and Asp-122. Lys-162 acts as the Proton acceptor in catalysis.

This sequence belongs to the class I-like SAM-binding methyltransferase superfamily. RNA methyltransferase RlmE family.

The protein resides in the cytoplasm. The enzyme catalyses uridine(2552) in 23S rRNA + S-adenosyl-L-methionine = 2'-O-methyluridine(2552) in 23S rRNA + S-adenosyl-L-homocysteine + H(+). Its function is as follows. Specifically methylates the uridine in position 2552 of 23S rRNA at the 2'-O position of the ribose in the fully assembled 50S ribosomal subunit. The sequence is that of Ribosomal RNA large subunit methyltransferase E from Coxiella burnetii (strain CbuK_Q154) (Coxiella burnetii (strain Q154)).